Reading from the N-terminus, the 738-residue chain is MSKSTAEIRQAFLDFFHSKGHQVVSSSTLVPNNDPTLLFTNAGMNQFKDVFLGLDKRAYSRATTSQRCVRAGGKHNDLENVGYTARHHTFFEMLGNFSFGDYFKHDAINFAWELLTSEQWFNLPKEKLWVTVYETDDEAYNIWANEVGVPHERIIRIGDNKGGAFASDNFWQMGDTGPCGPCSEIFFDHGDHIWGGPPGSAEEDGDRYIEIWNIVFMQFNRQSDGTMLPLPKPSVDTGMGLERIAAVLQHVNSNYEIDLFRDLIAAVADVTGATDLSSKSLRVIADHIRSCAFLISDGVIPSNENRGYVLRRIIRRAIRHGNMLGAKETFFYKLVAPLIAVMGPAAAELKQQQAMVEQVLKTEEEQFARTLERGLALLDDELSKLTGDTLDGETAFRLYDTYGFPVDLTADVCRERNLKVDEAGFEQAMEAQRRRARESSGFGADYNSLIRVDSASQFSGYDHVQQHATVTALFRNGEAVDEIHAGEEAVVVLNRTPFYGESGGQVGDKGELKNATATFSVTDTQKYGQAIGHVGILTTGTLRVNHSVEALVDVVRRNRIRLNHSATHLLHAALRNVLGEHVAQKGSLVNDKYLRFDFSHFEAMKPEQIRLVEDLVNEQIRRNMPVQTEVMELDAAKEKGAMALFGEKYDDQVRVLTMGDFSTELCGGTHASRTGDIGLFRILTESGSNLPGCTILRNLAIAGFSAFGSRKLSKRASEPSGRKFEPSVARQRCFSNGP.

The Zn(2+) site is built by H564, H568, C666, and H670.

The protein belongs to the class-II aminoacyl-tRNA synthetase family. In terms of assembly, homotetramer. The cofactor is Zn(2+).

The protein resides in the cytoplasm. The enzyme catalyses tRNA(Ala) + L-alanine + ATP = L-alanyl-tRNA(Ala) + AMP + diphosphate. In terms of biological role, catalyzes the attachment of alanine to tRNA(Ala) in a two-step reaction: alanine is first activated by ATP to form Ala-AMP and then transferred to the acceptor end of tRNA(Ala). Also edits incorrectly charged Ser-tRNA(Ala) and Gly-tRNA(Ala) via its editing domain. The protein is Alanine--tRNA ligase (alaS) of Yersinia pestis bv. Antiqua (strain Antiqua).